We begin with the raw amino-acid sequence, 336 residues long: Phosphoribosylformylglycinamidine cyclo-ligase (336 aa).

Belongs to the AIR synthase family.

It localises to the cytoplasm. The enzyme catalyses 2-formamido-N(1)-(5-O-phospho-beta-D-ribosyl)acetamidine + ATP = 5-amino-1-(5-phospho-beta-D-ribosyl)imidazole + ADP + phosphate + H(+). Its pathway is purine metabolism; IMP biosynthesis via de novo pathway; 5-amino-1-(5-phospho-D-ribosyl)imidazole from N(2)-formyl-N(1)-(5-phospho-D-ribosyl)glycinamide: step 2/2. The protein is Phosphoribosylformylglycinamidine cyclo-ligase of Thermoanaerobacter pseudethanolicus (strain ATCC 33223 / 39E) (Clostridium thermohydrosulfuricum).